Reading from the N-terminus, the 47-residue chain is Putative protein PinH (47 aa).

The region spanning M1–V47 is the Resolvase/invertase-type recombinase catalytic domain.

This sequence belongs to the site-specific recombinase resolvase family.

This chain is Putative protein PinH (pinH), found in Escherichia coli (strain K12).